The primary structure comprises 146 residues: Large ribosomal subunit protein uL15 (146 aa).

The segment at 1 to 62 (MRLHELRPKT…GQMPLQERLP (62 aa)) is disordered. Basic residues predominate over residues 10 to 21 (TNYKKSRKRKGR). A compositionally biased stretch (gly residues) spans 42-52 (TGGGVRPGFEG).

This sequence belongs to the universal ribosomal protein uL15 family. As to quaternary structure, part of the 50S ribosomal subunit.

Functionally, binds to the 23S rRNA. This Natranaerobius thermophilus (strain ATCC BAA-1301 / DSM 18059 / JW/NM-WN-LF) protein is Large ribosomal subunit protein uL15.